Here is an 81-residue protein sequence, read N- to C-terminus: Styelin-D (81 aa).

Positions 1 to 22 (MQMKATILIVLVALFMIQQSEA) are cleaved as a signal peptide. Trp24 is subject to 6'-bromotryptophan. Position 26 is a 3,4-dihydroxyarginine (Arg26). Lys27, Lys30, and Lys34 each carry 4,5-dihydroxylysine. Tyr36 and Tyr37 each carry 3',4'-dihydroxyphenylalanine. Lys38 carries the 4,5-dihydroxylysine modification. Lys40 is modified (5-hydroxylysine). 3',4'-dihydroxyphenylalanine is present on residues Tyr41 and Tyr42. Position 44 is a 5-hydroxylysine (Lys44). Leu54 is subject to Leucine amide. A propeptide spans 56 to 81 (DMTDEEFQDFMKEVEQAREEELQSRQ) (removed in mature form).

Post-translationally, contains L-DOPA (3',4'-dihydroxyphenylalanine). Hemocytes and pharyngeal tissues.

The protein resides in the secreted. Bactericidal against several Gram-positive and Gram-negative bacteria. Plays a significant role in the innate immune mechanisms of S.clava. The polypeptide is Styelin-D (Styela clava (Sea squirt)).